The following is a 481-amino-acid chain: 3-isopropylmalate dehydratase large subunit (481 aa).

[4Fe-4S] cluster contacts are provided by C357, C417, and C420. Residues 429–441 (SPGQRCASTSNRN) show a composition bias toward polar residues. The segment at 429 to 451 (SPGQRCASTSNRNFEGRQGKGGR) is disordered.

The protein belongs to the aconitase/IPM isomerase family. LeuC type 1 subfamily. Heterodimer of LeuC and LeuD. It depends on [4Fe-4S] cluster as a cofactor.

The enzyme catalyses (2R,3S)-3-isopropylmalate = (2S)-2-isopropylmalate. The protein operates within amino-acid biosynthesis; L-leucine biosynthesis; L-leucine from 3-methyl-2-oxobutanoate: step 2/4. Functionally, catalyzes the isomerization between 2-isopropylmalate and 3-isopropylmalate, via the formation of 2-isopropylmaleate. This chain is 3-isopropylmalate dehydratase large subunit, found in Mycobacterium sp. (strain JLS).